The chain runs to 154 residues: Putative pre-16S rRNA nuclease (154 aa).

The protein belongs to the YqgF nuclease family.

Its subcellular location is the cytoplasm. Its function is as follows. Could be a nuclease involved in processing of the 5'-end of pre-16S rRNA. This Pelotomaculum thermopropionicum (strain DSM 13744 / JCM 10971 / SI) protein is Putative pre-16S rRNA nuclease.